Reading from the N-terminus, the 51-residue chain is Lantibiotic streptococcin A-M49 (51 aa).

A propeptide spanning residues 1-25 (MTKEHEIINSIQEVSLEELDQIIGA) is cleaved from the precursor. Cross-links (beta-methyllanthionine (Thr-Cys)) lie at residues 33 to 38 (TISHEC) and 42 to 50 (TWAFLATCC). The lanthionine (Ser-Cys) cross-link spans 35–49 (SHECHLNTWAFLATC). Position 48 is a 2,3-didehydrobutyrine (T48).

The protein belongs to the type A lantibiotic family. In terms of processing, maturation of lantibiotics involves the enzymatic conversion of Thr, and Ser into dehydrated AA and the formation of thioether bonds with cysteine. This is followed by membrane translocation and cleavage of the modified precursor.

It localises to the secreted. The protein localises to the cell surface. Its function is as follows. Lanthionine-containing peptide antibiotic (lantibiotic) active on certain Gram-positive bacteria. The bactericidal activity of lantibiotics is based on depolarization of energized bacterial cytoplasmic membranes, initiated by the formation of aqueous transmembrane pores. The sequence is that of Lantibiotic streptococcin A-M49 (scnA') from Streptococcus pyogenes serotype M49.